The following is a 192-amino-acid chain: Secreted phosphoprotein 24 (192 aa).

An N-terminal signal peptide occupies residues 1–29 (MGKTPEDFERHTMRSLIFVLALSVFTCSG). 2 cysteine pairs are disulfide-bonded: cysteine 92–cysteine 103 and cysteine 116–cysteine 134. The interval 155 to 192 (TDPRKRGSSRSEAFSSRGRGHSNGDWRKPDYTSPGKVE) is disordered.

The protein belongs to the SPP2 family. In terms of processing, multiply phosphorylated at serine residues.

The protein localises to the secreted. Its function is as follows. Could coordinate an aspect of bone turnover. This chain is Secreted phosphoprotein 24 (SPP2), found in Gallus gallus (Chicken).